The following is a 636-amino-acid chain: DNA gyrase subunit B (636 aa).

A Toprim domain is found at 421–535 (TELFIVEGDS…QGRVYIALPP (115 aa)). Positions 427, 500, and 502 each coordinate Mg(2+).

The protein belongs to the type II topoisomerase GyrB family. In terms of assembly, heterotetramer, composed of two GyrA and two GyrB chains. In the heterotetramer, GyrA contains the active site tyrosine that forms a transient covalent intermediate with DNA, while GyrB binds cofactors and catalyzes ATP hydrolysis. Requires Mg(2+) as cofactor. It depends on Mn(2+) as a cofactor. Ca(2+) serves as cofactor.

The protein localises to the cytoplasm. The catalysed reaction is ATP-dependent breakage, passage and rejoining of double-stranded DNA.. Its function is as follows. A type II topoisomerase that negatively supercoils closed circular double-stranded (ds) DNA in an ATP-dependent manner to modulate DNA topology and maintain chromosomes in an underwound state. Negative supercoiling favors strand separation, and DNA replication, transcription, recombination and repair, all of which involve strand separation. Also able to catalyze the interconversion of other topological isomers of dsDNA rings, including catenanes and knotted rings. Type II topoisomerases break and join 2 DNA strands simultaneously in an ATP-dependent manner. This Thermotoga maritima (strain ATCC 43589 / DSM 3109 / JCM 10099 / NBRC 100826 / MSB8) protein is DNA gyrase subunit B.